The following is a 305-amino-acid chain: UDP-3-O-acyl-N-acetylglucosamine deacetylase (305 aa).

His-79, His-238, and Asp-242 together coordinate Zn(2+). The active-site Proton donor is the His-265.

It belongs to the LpxC family. Requires Zn(2+) as cofactor.

It catalyses the reaction a UDP-3-O-[(3R)-3-hydroxyacyl]-N-acetyl-alpha-D-glucosamine + H2O = a UDP-3-O-[(3R)-3-hydroxyacyl]-alpha-D-glucosamine + acetate. The protein operates within glycolipid biosynthesis; lipid IV(A) biosynthesis; lipid IV(A) from (3R)-3-hydroxytetradecanoyl-[acyl-carrier-protein] and UDP-N-acetyl-alpha-D-glucosamine: step 2/6. Catalyzes the hydrolysis of UDP-3-O-myristoyl-N-acetylglucosamine to form UDP-3-O-myristoylglucosamine and acetate, the committed step in lipid A biosynthesis. This Shigella dysenteriae serotype 1 (strain Sd197) protein is UDP-3-O-acyl-N-acetylglucosamine deacetylase.